The following is an 825-amino-acid chain: Translation initiation factor IF-2 (825 aa).

Basic and acidic residues-rich tracts occupy residues 1–19 (MTKK…DNKK), 35–45 (RKGEKKTEGKR), 70–98 (LLKD…EYKK), and 113–122 (KKVESVEKPA). The disordered stretch occupies residues 1–239 (MTKKQENETS…TQRKDRPLPE (239 aa)). The segment covering 158–169 (PSSSRRPSSRPS) has biased composition (low complexity). The span at 181–191 (GRRRKSGKPGR) shows a compositional bias: basic residues. The span at 194–208 (QNSYADQGRGANSNR) shows a compositional bias: polar residues. Positions 211 to 220 (QRKRKNKKHQ) are enriched in basic residues. A tr-type G domain is found at 326 to 495 (VRPPVVTIMG…ILEADMLELK (170 aa)). The G1 stretch occupies residues 335-342 (GHVDHGKT). 335–342 (GHVDHGKT) contacts GTP. Residues 360-364 (GITQN) are G2. The segment at 381 to 384 (DTPG) is G3. GTP contacts are provided by residues 381 to 385 (DTPGH) and 435 to 438 (NKMD). The segment at 435-438 (NKMD) is G4. Residues 471-473 (SAK) are G5.

Belongs to the TRAFAC class translation factor GTPase superfamily. Classic translation factor GTPase family. IF-2 subfamily.

It localises to the cytoplasm. In terms of biological role, one of the essential components for the initiation of protein synthesis. Protects formylmethionyl-tRNA from spontaneous hydrolysis and promotes its binding to the 30S ribosomal subunits. Also involved in the hydrolysis of GTP during the formation of the 70S ribosomal complex. The sequence is that of Translation initiation factor IF-2 from Lactobacillus delbrueckii subsp. bulgaricus (strain ATCC 11842 / DSM 20081 / BCRC 10696 / JCM 1002 / NBRC 13953 / NCIMB 11778 / NCTC 12712 / WDCM 00102 / Lb 14).